Consider the following 179-residue polypeptide: Large ribosomal subunit protein uL5 (179 aa).

It belongs to the universal ribosomal protein uL5 family. As to quaternary structure, part of the 50S ribosomal subunit; part of the 5S rRNA/L5/L18/L25 subcomplex. Contacts the 5S rRNA and the P site tRNA. Forms a bridge to the 30S subunit in the 70S ribosome.

In terms of biological role, this is one of the proteins that bind and probably mediate the attachment of the 5S RNA into the large ribosomal subunit, where it forms part of the central protuberance. In the 70S ribosome it contacts protein S13 of the 30S subunit (bridge B1b), connecting the 2 subunits; this bridge is implicated in subunit movement. Contacts the P site tRNA; the 5S rRNA and some of its associated proteins might help stabilize positioning of ribosome-bound tRNAs. The protein is Large ribosomal subunit protein uL5 of Synechococcus sp. (strain RCC307).